Here is a 620-residue protein sequence, read N- to C-terminus: Chaperone protein HscA homolog (620 aa).

The protein belongs to the heat shock protein 70 family.

Functionally, chaperone involved in the maturation of iron-sulfur cluster-containing proteins. Has a low intrinsic ATPase activity which is markedly stimulated by HscB. This is Chaperone protein HscA homolog from Colwellia psychrerythraea (strain 34H / ATCC BAA-681) (Vibrio psychroerythus).